The chain runs to 360 residues: Peptide chain release factor 1 (360 aa).

Position 235 is an N5-methylglutamine (Q235).

This sequence belongs to the prokaryotic/mitochondrial release factor family. Post-translationally, methylated by PrmC. Methylation increases the termination efficiency of RF1.

Its subcellular location is the cytoplasm. In terms of biological role, peptide chain release factor 1 directs the termination of translation in response to the peptide chain termination codons UAG and UAA. The protein is Peptide chain release factor 1 of Burkholderia thailandensis (strain ATCC 700388 / DSM 13276 / CCUG 48851 / CIP 106301 / E264).